The following is a 101-amino-acid chain: Citrate lyase acyl carrier protein (101 aa).

O-(phosphoribosyl dephospho-coenzyme A)serine is present on S14.

Belongs to the CitD family. As to quaternary structure, oligomer with a subunit composition of (alpha,beta,gamma)6.

It is found in the cytoplasm. Its function is as follows. Covalent carrier of the coenzyme of citrate lyase. The chain is Citrate lyase acyl carrier protein from Clostridium perfringens (strain 13 / Type A).